Consider the following 322-residue polypeptide: HPr kinase/phosphorylase (322 aa).

Active-site residues include histidine 146 and lysine 167. Glycine 161–serine 168 contributes to the ATP binding site. A Mg(2+)-binding site is contributed by serine 168. Aspartate 185 acts as the Proton acceptor; for phosphorylation activity. Proton donor; for dephosphorylation activity in catalysis. Residues leucine 209 to aspartate 218 are important for the catalytic mechanism of both phosphorylation and dephosphorylation. Glutamate 210 provides a ligand contact to Mg(2+). The active site involves arginine 250. The important for the catalytic mechanism of dephosphorylation stretch occupies residues glutamine 271–arginine 276.

The protein belongs to the HPrK/P family. In terms of assembly, homohexamer. The cofactor is Mg(2+).

The catalysed reaction is [HPr protein]-L-serine + ATP = [HPr protein]-O-phospho-L-serine + ADP + H(+). It catalyses the reaction [HPr protein]-O-phospho-L-serine + phosphate + H(+) = [HPr protein]-L-serine + diphosphate. Catalyzes the ATP- as well as the pyrophosphate-dependent phosphorylation of a specific serine residue in HPr, a phosphocarrier protein of the phosphoenolpyruvate-dependent sugar phosphotransferase system (PTS). HprK/P also catalyzes the pyrophosphate-producing, inorganic phosphate-dependent dephosphorylation (phosphorolysis) of seryl-phosphorylated HPr (P-Ser-HPr). This chain is HPr kinase/phosphorylase, found in Burkholderia mallei (strain NCTC 10247).